The chain runs to 323 residues: Tumor-associated calcium signal transducer 2 (323 aa).

Positions 1-26 (MARGPGLAPPPLRLPLLLLVLAAVTG) are cleaved as a signal peptide. Residues 27-274 (HTAAQDNCTC…PPKFSMKRLT (248 aa)) lie on the Extracellular side of the membrane. N-linked (GlcNAc...) asparagine glycosylation occurs at asparagine 33. One can recognise a Thyroglobulin type-1 domain in the interval 70–145 (TSKCLLLKAR…TDKGDLSLRC (76 aa)). 3 disulfide bridges follow: cysteine 73-cysteine 108, cysteine 119-cysteine 125, and cysteine 127-cysteine 145. The N-linked (GlcNAc...) asparagine glycan is linked to asparagine 120. Asparagine 168 and asparagine 208 each carry an N-linked (GlcNAc...) asparagine glycan. The helical transmembrane segment at 275-297 (AGLIAVIVVVVVALVAGMAVLVI) threads the bilayer. Residues 298 to 323 (TNRRKSGKYKKVEIKELGELRKEPSL) lie on the Cytoplasmic side of the membrane.

This sequence belongs to the EPCAM family. The N-terminus is blocked. As to expression, placenta, pancreatic carcinoma cell lines.

It localises to the membrane. In terms of biological role, may function as a growth factor receptor. This chain is Tumor-associated calcium signal transducer 2 (TACSTD2), found in Homo sapiens (Human).